The sequence spans 341 residues: Ribosomal RNA small subunit methyltransferase H (341 aa).

S-adenosyl-L-methionine contacts are provided by residues 47-49, Asp-64, Phe-91, Asp-109, and Gln-116; that span reads GGY. Residues 292–318 form a disordered region; it reads VAASEDEASRNPRARSAKLRAGVRTPA.

The protein belongs to the methyltransferase superfamily. RsmH family.

The protein localises to the cytoplasm. The enzyme catalyses cytidine(1402) in 16S rRNA + S-adenosyl-L-methionine = N(4)-methylcytidine(1402) in 16S rRNA + S-adenosyl-L-homocysteine + H(+). Specifically methylates the N4 position of cytidine in position 1402 (C1402) of 16S rRNA. This Sinorhizobium fredii (strain NBRC 101917 / NGR234) protein is Ribosomal RNA small subunit methyltransferase H.